The chain runs to 62 residues: Large ribosomal subunit protein bL28 (62 aa).

This sequence belongs to the bacterial ribosomal protein bL28 family.

The protein is Large ribosomal subunit protein bL28 of Helicobacter acinonychis (strain Sheeba).